A 237-amino-acid chain; its full sequence is Ribonuclease PH (237 aa).

Residues Arg86 and 124–126 (GTR) each bind phosphate.

This sequence belongs to the RNase PH family. Homohexameric ring arranged as a trimer of dimers.

The enzyme catalyses tRNA(n+1) + phosphate = tRNA(n) + a ribonucleoside 5'-diphosphate. Functionally, phosphorolytic 3'-5' exoribonuclease that plays an important role in tRNA 3'-end maturation. Removes nucleotide residues following the 3'-CCA terminus of tRNAs; can also add nucleotides to the ends of RNA molecules by using nucleoside diphosphates as substrates, but this may not be physiologically important. Probably plays a role in initiation of 16S rRNA degradation (leading to ribosome degradation) during starvation. This is Ribonuclease PH from Cereibacter sphaeroides (strain ATCC 17029 / ATH 2.4.9) (Rhodobacter sphaeroides).